The following is a 1145-amino-acid chain: Nucleolar protein 6 (1145 aa).

Residues 1-46 form a disordered region; sequence MQKKRNRAGPPQQEAASDDGEMSDSSDKMEVAQGKGKSAVKRAPDA.

It belongs to the NRAP family. Part of the small subunit (SSU) processome, composed of more than 70 proteins and the RNA chaperone small nucleolar RNA (snoRNA) U3.

The protein resides in the nucleus. Its subcellular location is the nucleolus. The protein localises to the chromosome. Functionally, part of the small subunit (SSU) processome, first precursor of the small eukaryotic ribosomal subunit. During the assembly of the SSU processome in the nucleolus, many ribosome biogenesis factors, an RNA chaperone and ribosomal proteins associate with the nascent pre-rRNA and work in concert to generate RNA folding, modifications, rearrangements and cleavage as well as targeted degradation of pre-ribosomal RNA by the RNA exosome. In Xenopus tropicalis (Western clawed frog), this protein is Nucleolar protein 6 (nol6).